Consider the following 181-residue polypeptide: Acireductone dioxygenase (181 aa).

The span at 1–10 shows a compositional bias: acidic residues; that stretch reads MRAYIYDEES. The tract at residues 1 to 23 is disordered; sequence MRAYIYDEESQLSPQDEHESSQS. Positions 82, 84, 88, and 128 each coordinate Fe(2+). Ni(2+)-binding residues include H82, H84, E88, and H128.

It belongs to the acireductone dioxygenase (ARD) family. The cofactor is Fe(2+). Requires Ni(2+) as cofactor.

The protein resides in the cytoplasm. It is found in the nucleus. The catalysed reaction is 1,2-dihydroxy-5-(methylsulfanyl)pent-1-en-3-one + O2 = 4-methylsulfanyl-2-oxobutanoate + formate + 2 H(+). The enzyme catalyses 1,2-dihydroxy-5-(methylsulfanyl)pent-1-en-3-one + O2 = 3-(methylsulfanyl)propanoate + CO + formate + 2 H(+). It functions in the pathway amino-acid biosynthesis; L-methionine biosynthesis via salvage pathway; L-methionine from S-methyl-5-thio-alpha-D-ribose 1-phosphate: step 5/6. Catalyzes 2 different reactions between oxygen and the acireductone 1,2-dihydroxy-3-keto-5-methylthiopentene (DHK-MTPene) depending upon the metal bound in the active site. Fe-containing acireductone dioxygenase (Fe-ARD) produces formate and 2-keto-4-methylthiobutyrate (KMTB), the alpha-ketoacid precursor of methionine in the methionine recycle pathway. Ni-containing acireductone dioxygenase (Ni-ARD) produces methylthiopropionate, carbon monoxide and formate, and does not lie on the methionine recycle pathway. This Puccinia graminis f. sp. tritici (strain CRL 75-36-700-3 / race SCCL) (Black stem rust fungus) protein is Acireductone dioxygenase.